Reading from the N-terminus, the 204-residue chain is U1 small nuclear ribonucleoprotein C (204 aa).

The segment at 4–36 adopts a Matrin-type zinc-finger fold; the sequence is FFCDYCDVYLTHDSMSVRKAHNSGRNHLRNVVD. The segment at 65–204 is disordered; sequence ANPMLPQNQP…GAGAPGHEKR (140 aa). Pro residues-rich tracts occupy residues 77 to 154 and 166 to 192; these read GFPP…PGAP and APPP…PGFA.

This sequence belongs to the U1 small nuclear ribonucleoprotein C family. As to quaternary structure, U1 snRNP is composed of the 7 core Sm proteins B/B', D1, D2, D3, E, F and G that assemble in a heptameric protein ring on the Sm site of the small nuclear RNA to form the core snRNP, and at least 3 U1 snRNP-specific proteins U1-70K, U1-A and U1-C. U1-C interacts with U1 snRNA and the 5' splice-site region of the pre-mRNA.

The protein resides in the nucleus. Its function is as follows. Component of the spliceosomal U1 snRNP, which is essential for recognition of the pre-mRNA 5' splice-site and the subsequent assembly of the spliceosome. U1-C is directly involved in initial 5' splice-site recognition for both constitutive and regulated alternative splicing. The interaction with the 5' splice-site seems to precede base-pairing between the pre-mRNA and the U1 snRNA. Stimulates commitment or early (E) complex formation by stabilizing the base pairing of the 5' end of the U1 snRNA and the 5' splice-site region. In Fusarium vanettenii (strain ATCC MYA-4622 / CBS 123669 / FGSC 9596 / NRRL 45880 / 77-13-4) (Fusarium solani subsp. pisi), this protein is U1 small nuclear ribonucleoprotein C.